The primary structure comprises 484 residues: Suppressor of fused homolog (484 aa).

The disordered stretch occupies residues 1-24 (MAELRPSGAPGPTAPPAPGPTAPP). Pro residues predominate over residues 12 to 23 (PTAPPAPGPTAP). Lysine 257 is covalently cross-linked (Glycyl lysine isopeptide (Lys-Gly) (interchain with G-Cter in ubiquitin)). The segment at 279-360 (SRPPEDDEDS…SSTAIIPHEL (82 aa)) is disordered. Serine 301 is subject to Phosphoserine. At lysine 303 the chain carries N6-acetyllysine. A Glycyl lysine isopeptide (Lys-Gly) (interchain with G-Cter in SUMO2) cross-link involves residue lysine 321. Over residues 336–347 (AHDRAPSRKDSL) the composition is skewed to basic and acidic residues. Serine 342, serine 346, and serine 352 each carry phosphoserine. Residue threonine 353 is modified to Phosphothreonine. A Phosphoserine modification is found at serine 481.

Belongs to the SUFU family. May form homodimers. Part of a DNA-bound corepressor complex containing SAP18, GLI1 and SIN3. Part of a complex containing CTNNB1. Binds BTRC, GLI2, GLI3, SAP18 and STK36. Binds both free and DNA-bound GLI1. Interacts with KIF7. Interacts with GLI3FL and this interaction regulates the formation of either repressor or activator forms of GLI3. Its association with GLI3FL is regulated by Hh signaling and dissociation of the SUFU-GLI3 interaction requires the presence of the ciliary motor KIF3A. Interacts with ULK3; inactivating the protein kinase activity of ULK3. Interacts with RAB23. Polyubiquitinated at Lys-257 by the SCF(FBXL17) complex, leading to its subsequent degradation and allowing the release of GLI1 for proper hedgehog/smoothened signal transduction. Ubiquitination is impaired by phosphorylation at Ser-342, Ser-346, Ser-352 and Thr-353. In terms of processing, phosphorylation at Ser-342, Ser-346, Ser-352 and Thr-353 prevents ubiquitination by the SCF(FBXL17) complex. Ubiquitous in adult tissues. Detected in osteoblasts of the perichondrium in the developing limb of 12-week old embryos. Isoform 1 is detected in fetal brain, lung, kidney and testis. Isoform 2 is detected in fetal testis, and at much lower levels in fetal brain, lung and kidney.

The protein resides in the cytoplasm. It is found in the nucleus. In terms of biological role, negative regulator in the hedgehog/smoothened signaling pathway. Down-regulates GLI1-mediated transactivation of target genes. Down-regulates GLI2-mediated transactivation of target genes. Part of a corepressor complex that acts on DNA-bound GLI1. May also act by linking GLI1 to BTRC and thereby targeting GLI1 to degradation by the proteasome. Sequesters GLI1, GLI2 and GLI3 in the cytoplasm, this effect is overcome by binding of STK36 to both SUFU and a GLI protein. Negative regulator of beta-catenin signaling. Regulates the formation of either the repressor form (GLI3R) or the activator form (GLI3A) of the full-length form of GLI3 (GLI3FL). GLI3FL is complexed with SUFU in the cytoplasm and is maintained in a neutral state. Without the Hh signal, the SUFU-GLI3 complex is recruited to cilia, leading to the efficient processing of GLI3FL into GLI3R. When Hh signaling is initiated, SUFU dissociates from GLI3FL and the latter translocates to the nucleus, where it is phosphorylated, destabilized, and converted to a transcriptional activator (GLI3A). Required for normal embryonic development. Required for the proper formation of hair follicles and the control of epidermal differentiation. The polypeptide is Suppressor of fused homolog (Homo sapiens (Human)).